The following is a 190-amino-acid chain: RNA pyrophosphohydrolase (190 aa).

One can recognise a Nudix hydrolase domain in the interval 6–149; sequence GYRPNVGIVL…KRGVYARALC (144 aa). A Nudix box motif is present at residues 38–59; it reads GGMHSDETPVEAMYRELNEEIG.

This sequence belongs to the Nudix hydrolase family. RppH subfamily. Requires a divalent metal cation as cofactor.

In terms of biological role, accelerates the degradation of transcripts by removing pyrophosphate from the 5'-end of triphosphorylated RNA, leading to a more labile monophosphorylated state that can stimulate subsequent ribonuclease cleavage. This is RNA pyrophosphohydrolase from Xylella fastidiosa (strain M12).